The primary structure comprises 267 residues: Malonyl-[acyl-carrier protein] O-methyltransferase (267 aa).

The protein belongs to the methyltransferase superfamily.

The enzyme catalyses malonyl-[ACP] + S-adenosyl-L-methionine = malonyl-[ACP] methyl ester + S-adenosyl-L-homocysteine. The protein operates within cofactor biosynthesis; biotin biosynthesis. Converts the free carboxyl group of a malonyl-thioester to its methyl ester by transfer of a methyl group from S-adenosyl-L-methionine (SAM). It allows to synthesize pimeloyl-ACP via the fatty acid synthetic pathway. The sequence is that of Malonyl-[acyl-carrier protein] O-methyltransferase from Geobacter sulfurreducens (strain ATCC 51573 / DSM 12127 / PCA).